The primary structure comprises 304 residues: Nod factor export ATP-binding protein I (304 aa).

Residues 6-236 (IEFDKVKKSY…EIGCDVIEIF (231 aa)) enclose the ABC transporter domain. 38-45 (GPNGAGKT) lines the ATP pocket.

This sequence belongs to the ABC transporter superfamily. Lipooligosaccharide exporter (TC 3.A.1.102) family. In terms of assembly, the complex is composed of two ATP-binding proteins (NodI) and two transmembrane proteins (NodJ).

The protein localises to the cell inner membrane. Functionally, part of the ABC transporter complex NodIJ involved in the export of the nodulation factors (Nod factors), the bacterial signal molecules that induce symbiosis and subsequent nodulation induction. Nod factors are LCO (lipo-chitin oligosaccharide), a modified beta-1,4-linked N-acetylglucosamine oligosaccharide. This subunit is responsible for energy coupling to the transport system. The chain is Nod factor export ATP-binding protein I from Paraburkholderia xenovorans (strain LB400).